The sequence spans 88 residues: Small ribosomal subunit protein bS16 (88 aa).

The protein belongs to the bacterial ribosomal protein bS16 family.

This is Small ribosomal subunit protein bS16 from Desulfitobacterium hafniense (strain DSM 10664 / DCB-2).